The sequence spans 282 residues: Bifunctional protein FolD (282 aa).

Residues 164 to 166 (GRS) and Ser189 each bind NADP(+).

The protein belongs to the tetrahydrofolate dehydrogenase/cyclohydrolase family. Homodimer.

The catalysed reaction is (6R)-5,10-methylene-5,6,7,8-tetrahydrofolate + NADP(+) = (6R)-5,10-methenyltetrahydrofolate + NADPH. The enzyme catalyses (6R)-5,10-methenyltetrahydrofolate + H2O = (6R)-10-formyltetrahydrofolate + H(+). It participates in one-carbon metabolism; tetrahydrofolate interconversion. Catalyzes the oxidation of 5,10-methylenetetrahydrofolate to 5,10-methenyltetrahydrofolate and then the hydrolysis of 5,10-methenyltetrahydrofolate to 10-formyltetrahydrofolate. The sequence is that of Bifunctional protein FolD from Lactobacillus gasseri (strain ATCC 33323 / DSM 20243 / BCRC 14619 / CIP 102991 / JCM 1131 / KCTC 3163 / NCIMB 11718 / NCTC 13722 / AM63).